The following is a 245-amino-acid chain: MKDVIVIKIGGVAAKKLSDKFIKQMQEWIAAGKKIVVVHGGGLVINQLMKERQLPTRKVKGLRVTAKSDLPIIQQALLGQVGRTLTQELNYSDIESLQLVSHLGKTVSADFIDKDVYGYVGQVKAIQTAYLEQLLAADIVPVLASLGENAAGELLNINADYLAAAVASSLQAEKLILMTDIEGVLEDKKVLPQILTSQVSKKIQTGVIKGGMIPKIESAVQTVLSGVGQVLIGDNLLTGTLIAEG.

Residues Gly41–Gly42, Arg63, and Asn156 each bind substrate.

It belongs to the acetylglutamate kinase family. ArgB subfamily.

It localises to the cytoplasm. It catalyses the reaction N-acetyl-L-glutamate + ATP = N-acetyl-L-glutamyl 5-phosphate + ADP. It participates in amino-acid biosynthesis; L-arginine biosynthesis; N(2)-acetyl-L-ornithine from L-glutamate: step 2/4. Catalyzes the ATP-dependent phosphorylation of N-acetyl-L-glutamate. The sequence is that of Acetylglutamate kinase from Streptococcus gordonii (strain Challis / ATCC 35105 / BCRC 15272 / CH1 / DL1 / V288).